The sequence spans 188 residues: Methylamine dehydrogenase light chain (188 aa).

Residues 1-57 (MLGNFRFDDMVEKLSRRVAGQTSRRSVIGKLGTAMLGIGLVPLLPVDRRGRVSRANA) constitute a signal peptide (tat-type signal). 6 disulfides stabilise this stretch: Cys80–Cys145, Cys86–Cys118, Cys93–Cys178, Cys95–Cys143, Cys103–Cys134, and Cys135–Cys166. Tryptophylquinone is present on Trp114. The segment at residues 114-165 (WVASCYNPTDGQSYLIAYRDCCGYNVSGRCPCLNTEGELPVYRPEFANDIIW) is a cross-link (tryptophan tryptophylquinone (Trp-Trp)).

Belongs to the aromatic amine dehydrogenase light chain family. Heterotetramer of two light and two heavy chains. Tryptophan tryptophylquinone residue serves as cofactor. Predicted to be exported by the Tat system. The position of the signal peptide cleavage has not been experimentally proven. In terms of processing, tryptophan tryptophylquinone (TTQ) is formed by oxidation of the indole ring of a tryptophan to form tryptophylquinone followed by covalent cross-linking with another tryptophan residue.

Its subcellular location is the periplasm. It catalyses the reaction 2 oxidized [amicyanin] + methylamine + H2O = 2 reduced [amicyanin] + formaldehyde + NH4(+) + 2 H(+). The protein operates within one-carbon metabolism; methylamine degradation; formaldehyde from methylamine: step 1/1. Its function is as follows. Methylamine dehydrogenase carries out the oxidation of methylamine. Electrons are passed from methylamine dehydrogenase to amicyanin. The protein is Methylamine dehydrogenase light chain (mauA) of Paracoccus denitrificans.